Reading from the N-terminus, the 468-residue chain is 3-isopropylmalate dehydratase large subunit (468 aa).

The [4Fe-4S] cluster site is built by C349, C409, and C412.

It belongs to the aconitase/IPM isomerase family. LeuC type 1 subfamily. In terms of assembly, heterodimer of LeuC and LeuD. Requires [4Fe-4S] cluster as cofactor.

The catalysed reaction is (2R,3S)-3-isopropylmalate = (2S)-2-isopropylmalate. Its pathway is amino-acid biosynthesis; L-leucine biosynthesis; L-leucine from 3-methyl-2-oxobutanoate: step 2/4. Catalyzes the isomerization between 2-isopropylmalate and 3-isopropylmalate, via the formation of 2-isopropylmaleate. This chain is 3-isopropylmalate dehydratase large subunit, found in Ruegeria pomeroyi (strain ATCC 700808 / DSM 15171 / DSS-3) (Silicibacter pomeroyi).